The primary structure comprises 253 residues: 20 kDa chaperonin, chloroplastic (253 aa).

The N-terminal 50 residues, 1–50 (MAATQLTASPVTMSARSLASLDGLRASSVKFSSLKPGTLRQSQFRRLVVK), are a transit peptide targeting the chloroplast. Cpn-10 domain regions lie at residues 60–153 (TSIK…GILE) and 159–252 (DLKP…MAIL). T212 is modified (phosphothreonine).

It belongs to the GroES chaperonin family. As to quaternary structure, homotetramer. Forms stable complexes with CPN60 in the presence of ATP. Interacts with FSD1. Interacts with CLPT1 and CLPT2. Interacts with CHLH. Interacts with SPY. In terms of tissue distribution, ubiquitous. Most abundant in leaves and inflorescence. Low levels found in roots.

The protein localises to the plastid. Its subcellular location is the chloroplast. In terms of biological role, seems to function only as a co-chaperone, along with CPN60, and in certain cases is essential for the discharge of biologically active proteins from CPN60. Required to activate the iron superoxide dismutases (FeSOD). Functionally, involved in abscisic acid (ABA) signaling, independently of its co-chaperone role. Acts as a negative regulator of the CHLH-WRKY40 coupled ABA signaling pathway, downstream of CHLH and upstream of WRKY40. This is 20 kDa chaperonin, chloroplastic (CPN20) from Arabidopsis thaliana (Mouse-ear cress).